Here is a 361-residue protein sequence, read N- to C-terminus: Serine/threonine-protein kinase SRK2I (361 aa).

In terms of domain architecture, Protein kinase spans 22 to 278; sequence YDFVKDIGSG…IPEIKTHSWF (257 aa). ATP contacts are provided by residues 28–36 and lysine 51; that span reads IGSGNFGVA. Aspartate 141 serves as the catalytic Proton acceptor.

The protein belongs to the protein kinase superfamily. Ser/Thr protein kinase family. In terms of assembly, interacts with ABI1. Interacts with I-2 and TOPP1. Interacts with FREE1 (via C-terminus). Post-translationally, autophosphorylated in vitro. Expressed at low levels in seeds, seedlings, roots (especially in tips), stems, leaves, shoots, flowers and siliques.

The catalysed reaction is L-seryl-[protein] + ATP = O-phospho-L-seryl-[protein] + ADP + H(+). The enzyme catalyses L-threonyl-[protein] + ATP = O-phospho-L-threonyl-[protein] + ADP + H(+). Activated by autophosphorylation of its activation loop. Together with SRK2D, key component and activator of the abscisic acid (ABA) signaling pathway that regulates numerous ABA responses, such as seed germination, Pro accumulation, root growth inhibition, dormancy and seedling growth, and, to a lesser extent, stomatal closure. In response to ABA, phosphorylates the ESCRT-I complex component FREE1, which is required for ABA-induced FREE1 nuclear import. In Arabidopsis thaliana (Mouse-ear cress), this protein is Serine/threonine-protein kinase SRK2I (SRK2I).